Consider the following 750-residue polypeptide: MEYTHQYSWIIPFIPFPVPMLIGVGLLLFPTATKKIRRIWAFPSILLLTIVMFFSLDLSIHQIQNSSIFQYVWSWTINNDISLEFGYLIDSLTSIMSILITTVGILVLIYSDNYMSHDQGYLRFFAYMTLFNISMLGLVTSSNLIQIYFFWELIGMCSYLLIGFWFTRPIAANACQKAFVTNRVGDFGLLLGILGIYWITGSLEFRDLFQIINNLISKNEMNLFFVTLFALLLFCGSVAKSAQFPLHVWLPDAMEGPTPISALIHAATMVAAGIFLVARLLPLFVLLPQIMNTIAFIGLITVILGATLAIAQKDIKKNLAYSTMSQLGYMMLALGMGSYRGALFHLITHAYSKALLFLGSGSIIHSMEALVGYSPAKSQNMVFMGGLTKHVPITKFFFLVGTLSLCGIPPFACFWSKDEILNDSRLYSPIVAIIACSAAALTAFYMFRIYLLVFEGYLNVHFLNFNGKKNSSFYSISLWGKKQVKLKIKNENFLLVLLKIKKNEITSFFIRKRYLHRVNQNIKNISRLFFGIMDFGMKKTACLYPNESNNTMQFSMLVLVLFTLFVGAIGISFSQGIDLDILSKLLIPFIDLLHKDSKNFVNYYEFFTNATFSLILTFWGIFIASFFYKSVYSYLKNLNLLNLFEKNFIKKKFSDHFQNIIYNWSYNHGYIDVFYEISFISSIRRLVKFNSFFDKKRIDGITNGIGITSFFLGEAIKNVGGGRISSYILLYILDILIFILIYINFVFIRY.

16 helical membrane-spanning segments follow: residues 9-29, 39-59, 89-109, 125-145, 147-167, 185-205, 219-239, 267-287, 290-310, 327-347, 354-374, 396-416, 427-447, 554-574, 606-626, and 728-748; these read WIIPFIPFPVPMLIGVGLLLF, IWAFPSILLLTIVMFFSLDLS, IDSLTSIMSILITTVGILVLI, FAYMTLFNISMLGLVTSSNLI, IYFFWELIGMCSYLLIGFWFT, GDFGLLLGILGIYWITGSLEF, NEMNLFFVTLFALLLFCGSVA, ATMVAAGIFLVARLLPLFVLL, IMNTIAFIGLITVILGATLAI, LGYMMLALGMGSYRGALFHLI, ALLFLGSGSIIHSMEALVGYS, FFFLVGTLSLCGIPPFACFWS, YSPIVAIIACSAAALTAFYMF, FSMLVLVLFTLFVGAIGISFS, FFTNATFSLILTFWGIFIASF, and ILLYILDILIFILIYINFVFI.

It belongs to the complex I subunit 5 family. In terms of assembly, NDH is composed of at least 16 different subunits, 5 of which are encoded in the nucleus.

It is found in the plastid. It localises to the chloroplast thylakoid membrane. It carries out the reaction a plastoquinone + NADH + (n+1) H(+)(in) = a plastoquinol + NAD(+) + n H(+)(out). It catalyses the reaction a plastoquinone + NADPH + (n+1) H(+)(in) = a plastoquinol + NADP(+) + n H(+)(out). Functionally, NDH shuttles electrons from NAD(P)H:plastoquinone, via FMN and iron-sulfur (Fe-S) centers, to quinones in the photosynthetic chain and possibly in a chloroplast respiratory chain. The immediate electron acceptor for the enzyme in this species is believed to be plastoquinone. Couples the redox reaction to proton translocation, and thus conserves the redox energy in a proton gradient. This Phaseolus vulgaris (Kidney bean) protein is NAD(P)H-quinone oxidoreductase subunit 5, chloroplastic (ndhF).